The following is a 397-amino-acid chain: Lysophospholipid transporter LplT (397 aa).

Transmembrane regions (helical) follow at residues 16–36 (MLAV…LLFA), 53–73 (VLQM…GQFA), 91–111 (LGAG…LVGI), 139–159 (LMES…GILA), 164–184 (LAAL…NLWI), 227–247 (LFWG…PVAL), 253–273 (AMPT…AGAA), 281–301 (TVSR…AFAV), 305–325 (LLPA…FIVP), 352–372 (NVAM…GVPP), and 373–393 (VAVG…LWVW).

The protein belongs to the major facilitator superfamily. LplT (TC 2.A.1.42) family.

Its subcellular location is the cell inner membrane. Catalyzes the facilitated diffusion of 2-acyl-glycero-3-phosphoethanolamine (2-acyl-GPE) into the cell. The polypeptide is Lysophospholipid transporter LplT (Klebsiella pneumoniae subsp. pneumoniae (strain ATCC 700721 / MGH 78578)).